Reading from the N-terminus, the 87-residue chain is Omega-lycotoxin-Am1c (87 aa).

The first 17 residues, 1 to 17 (MKLSIFFVLFFIAIAYC), serve as a signal peptide directing secretion. Positions 18 to 40 (QPEFLDDEEDEVEETLPVAEEGR) are excised as a propeptide. 4 cysteine pairs are disulfide-bonded: C44–C59, C51–C64, C58–C84, and C66–C82.

The protein belongs to the neurotoxin omega-lctx family. In terms of tissue distribution, expressed by the venom gland.

It localises to the secreted. Its function is as follows. Modulates Cav2.1/CACNA1A voltage-gated calcium channels (P/Q-type currents) in rat cerebellar Purkinje cells and hippocampal CA1-CA3 neurons. At saturating concentrations (&gt;10 nM) decelerates activation kinetics and slightly increases peak amplitude without affecting deactivation kinetics. In vivo, does not cause death when intravenously injected into mice. In rat models, through its activity on Cav2.1/CACNA1A, has an ameliorative effect on memory defects provoked by hyperstimulation of N-methyl-D-aspartate receptors (NMDARs) in the hippocampus. This Alopecosa marikovskyi (Wolf spider) protein is Omega-lycotoxin-Am1c.